A 269-amino-acid chain; its full sequence is Microtubule-associated protein RP/EB family member 1 (269 aa).

In terms of domain architecture, Calponin-homology (CH) spans Asn-14 to Asp-116. The tract at residues Arg-168–Gly-190 is disordered. The EB1 C-terminal domain occupies Thr-186–Ile-256.

The protein belongs to the MAPRE family.

The protein localises to the cytoplasm. Its subcellular location is the cytoskeleton. It localises to the microtubule organizing center. The protein resides in the centrosome. It is found in the golgi apparatus. The protein localises to the spindle. Its subcellular location is the spindle pole. Functionally, plus-end tracking protein (+TIP) that binds to the plus-end of microtubules and regulates the dynamics of the microtubule cytoskeleton. Promotes cytoplasmic microtubule nucleation and elongation. Involved in mitotic spindle positioning by stabilizing microtubules and promoting dynamic connection between astral microtubules and the cortex during mitotic chromosome segregation. This is Microtubule-associated protein RP/EB family member 1 (mapre1) from Xenopus tropicalis (Western clawed frog).